The primary structure comprises 251 residues: Orotidine 5'-phosphate decarboxylase (251 aa).

Substrate is bound by residues Asp19, Lys42, 69-78, Thr133, Arg194, Gln204, Gly224, and Arg225; that span reads DLKFHDIPNT. Lys71 acts as the Proton donor in catalysis.

This sequence belongs to the OMP decarboxylase family. Type 1 subfamily. As to quaternary structure, homodimer.

It catalyses the reaction orotidine 5'-phosphate + H(+) = UMP + CO2. Its pathway is pyrimidine metabolism; UMP biosynthesis via de novo pathway; UMP from orotate: step 2/2. Its function is as follows. Catalyzes the decarboxylation of orotidine 5'-monophosphate (OMP) to uridine 5'-monophosphate (UMP). This Syntrophus aciditrophicus (strain SB) protein is Orotidine 5'-phosphate decarboxylase.